The chain runs to 336 residues: Holliday junction branch migration complex subunit RuvB (336 aa).

The segment at methionine 1–tyrosine 183 is large ATPase domain (RuvB-L). ATP-binding positions include leucine 22, arginine 23, glycine 64, lysine 67, threonine 68, threonine 69, glutamate 130–phenylalanine 132, arginine 173, tyrosine 183, and arginine 220. Residue threonine 68 coordinates Mg(2+). Residues glutamine 184 to glutamine 254 form a small ATPAse domain (RuvB-S) region. The segment at serine 257–glutamate 336 is head domain (RuvB-H). Arginine 293 and arginine 317 together coordinate DNA.

This sequence belongs to the RuvB family. In terms of assembly, homohexamer. Forms an RuvA(8)-RuvB(12)-Holliday junction (HJ) complex. HJ DNA is sandwiched between 2 RuvA tetramers; dsDNA enters through RuvA and exits via RuvB. An RuvB hexamer assembles on each DNA strand where it exits the tetramer. Each RuvB hexamer is contacted by two RuvA subunits (via domain III) on 2 adjacent RuvB subunits; this complex drives branch migration. In the full resolvosome a probable DNA-RuvA(4)-RuvB(12)-RuvC(2) complex forms which resolves the HJ.

The protein localises to the cytoplasm. The catalysed reaction is ATP + H2O = ADP + phosphate + H(+). The RuvA-RuvB-RuvC complex processes Holliday junction (HJ) DNA during genetic recombination and DNA repair, while the RuvA-RuvB complex plays an important role in the rescue of blocked DNA replication forks via replication fork reversal (RFR). RuvA specifically binds to HJ cruciform DNA, conferring on it an open structure. The RuvB hexamer acts as an ATP-dependent pump, pulling dsDNA into and through the RuvAB complex. RuvB forms 2 homohexamers on either side of HJ DNA bound by 1 or 2 RuvA tetramers; 4 subunits per hexamer contact DNA at a time. Coordinated motions by a converter formed by DNA-disengaged RuvB subunits stimulates ATP hydrolysis and nucleotide exchange. Immobilization of the converter enables RuvB to convert the ATP-contained energy into a lever motion, pulling 2 nucleotides of DNA out of the RuvA tetramer per ATP hydrolyzed, thus driving DNA branch migration. The RuvB motors rotate together with the DNA substrate, which together with the progressing nucleotide cycle form the mechanistic basis for DNA recombination by continuous HJ branch migration. Branch migration allows RuvC to scan DNA until it finds its consensus sequence, where it cleaves and resolves cruciform DNA. The polypeptide is Holliday junction branch migration complex subunit RuvB (Lactobacillus delbrueckii subsp. bulgaricus (strain ATCC 11842 / DSM 20081 / BCRC 10696 / JCM 1002 / NBRC 13953 / NCIMB 11778 / NCTC 12712 / WDCM 00102 / Lb 14)).